A 234-amino-acid chain; its full sequence is Lactate utilization protein C 1 (234 aa).

This sequence belongs to the LutC/YkgG family.

Is involved in L-lactate degradation and allows cells to grow with lactate as the sole carbon source. This Bacillus mycoides (strain KBAB4) (Bacillus weihenstephanensis) protein is Lactate utilization protein C 1.